Here is a 179-residue protein sequence, read N- to C-terminus: UPF0227 protein VIBHAR_01524 (179 aa).

Belongs to the UPF0227 family.

This chain is UPF0227 protein VIBHAR_01524, found in Vibrio campbellii (strain ATCC BAA-1116).